A 396-amino-acid polypeptide reads, in one-letter code: uncharacterized protein (396 aa).

Belongs to the mycobacterial PPE family.

This is an uncharacterized protein from Mycobacterium tuberculosis (strain CDC 1551 / Oshkosh).